Here is a 175-residue protein sequence, read N- to C-terminus: 2-oxo-4-hydroxy-4-carboxy-5-ureidoimidazoline decarboxylase (175 aa).

The active-site Proton donor is His67. Residues Pro68, 84–88, and 119–123 contribute to the substrate site; these read SQNEQ and FVICA. Positions 173-175 match the Microbody targeting signal motif; it reads TKL.

This sequence belongs to the OHCU decarboxylase family.

The protein localises to the peroxisome. It catalyses the reaction 5-hydroxy-2-oxo-4-ureido-2,5-dihydro-1H-imidazole-5-carboxylate + H(+) = (S)-allantoin + CO2. It functions in the pathway purine metabolism; urate degradation; (S)-allantoin from urate: step 3/3. Its function is as follows. Catalyzes the stereoselective decarboxylation of 2-oxo-4-hydroxy-4-carboxy-5-ureidoimidazoline (OHCU) to (S)-allantoin. The polypeptide is 2-oxo-4-hydroxy-4-carboxy-5-ureidoimidazoline decarboxylase (urad) (Xenopus laevis (African clawed frog)).